The following is a 313-amino-acid chain: ADP-L-glycero-D-manno-heptose-6-epimerase (313 aa).

NADP(+) is bound by residues 10-11, 31-32, Lys-38, Arg-53, 75-79, and Asn-92; these read MI, DN, and EGACS. Tyr-139 serves as the catalytic Proton acceptor. Lys-143 lines the NADP(+) pocket. Asn-174 is a binding site for substrate. Residues Val-175 and Lys-183 each coordinate NADP(+). The Proton acceptor role is filled by Lys-183. Residues Ser-185, His-192, 206 to 209, Arg-214, and Tyr-277 contribute to the substrate site; that span reads FAGS.

The protein belongs to the NAD(P)-dependent epimerase/dehydratase family. HldD subfamily. In terms of assembly, homopentamer. NADP(+) serves as cofactor.

It carries out the reaction ADP-D-glycero-beta-D-manno-heptose = ADP-L-glycero-beta-D-manno-heptose. The protein operates within nucleotide-sugar biosynthesis; ADP-L-glycero-beta-D-manno-heptose biosynthesis; ADP-L-glycero-beta-D-manno-heptose from D-glycero-beta-D-manno-heptose 7-phosphate: step 4/4. Catalyzes the interconversion between ADP-D-glycero-beta-D-manno-heptose and ADP-L-glycero-beta-D-manno-heptose via an epimerization at carbon 6 of the heptose. This is ADP-L-glycero-D-manno-heptose-6-epimerase from Vibrio campbellii (strain ATCC BAA-1116).